Reading from the N-terminus, the 348-residue chain is Flagellar P-ring protein (348 aa).

The signal sequence occupies residues 1–16 (MRVLTIFLLFMTSIFA).

It belongs to the FlgI family. In terms of assembly, the basal body constitutes a major portion of the flagellar organelle and consists of four rings (L,P,S, and M) mounted on a central rod.

The protein resides in the periplasm. It localises to the bacterial flagellum basal body. Assembles around the rod to form the L-ring and probably protects the motor/basal body from shearing forces during rotation. The protein is Flagellar P-ring protein of Campylobacter jejuni subsp. jejuni serotype O:23/36 (strain 81-176).